A 434-amino-acid polypeptide reads, in one-letter code: Septin-6 (434 aa).

At alanine 2 the chain carries N-acetylalanine. Serine 27 is modified (phosphoserine). In terms of domain architecture, Septin-type G spans 39–305 (QGFCFNILCV…ELYRRCKLEE (267 aa)). The G1 motif stretch occupies residues 49-56 (GETGLGKS). Residues 49-56 (GETGLGKS), glycine 104, 185-193 (KSDAISKSE), glycine 239, and arginine 254 contribute to the GTP site. The segment at 101–104 (STVG) is G3 motif. A G4 motif region spans residues 184-187 (AKSD). Residues 321–407 (QETYEAKRNE…QRKAAAELLQ (87 aa)) are a coiled coil. Lysine 367 carries the post-translational modification N6-acetyllysine. Residues 403-434 (AELLQSQGSQAGGSQTLKRDKEKKNNPWLCIE) form a disordered region. The span at 407–417 (QSQGSQAGGSQ) shows a compositional bias: low complexity. Serine 416 bears the Phosphoserine mark. Threonine 418 is modified (phosphothreonine).

This sequence belongs to the TRAFAC class TrmE-Era-EngA-EngB-Septin-like GTPase superfamily. Septin GTPase family. In terms of assembly, septins polymerize into heterooligomeric protein complexes that form filaments, and associate with cellular membranes, actin filaments and microtubules. GTPase activity is required for filament formation. Filaments are assembled from asymmetrical heterotrimers, composed of SEPTIN2, SEPTIN6 and SEPTIN7 that associate head-to-head to form a hexameric unit. Within the trimer, directly interacts with SEPTIN2 and SEPTIN7. Also interacts with SEPTIN9 and SEPTIN12. Interaction with SEPTIN12 alters filament structure. Component of a septin core octameric complex consisting of SEPTIN12, SEPTIN7, SEPTIN6 and SEPTIN2 or SEPTIN4 in the order 12-7-6-2-2-6-7-12 or 12-7-6-4-4-6-7-12 and located in the sperm annulus. Interacts with SOCS7. Interacts with HNRNPA1. In terms of tissue distribution, expressed in the cerebral cortex (at protein level). Associated with synaptic vesicles in various brain regions, including glomeruli of the olfactory bulb (at protein level).

It localises to the cytoplasm. Its subcellular location is the cytoskeleton. The protein localises to the spindle. The protein resides in the chromosome. It is found in the centromere. It localises to the kinetochore. Its subcellular location is the cleavage furrow. The protein localises to the midbody. The protein resides in the cell projection. It is found in the cilium. It localises to the flagellum. Functionally, filament-forming cytoskeletal GTPase. Required for normal organization of the actin cytoskeleton. Involved in cytokinesis. Forms a filamentous structure with SEPTIN12, SEPTIN6, SEPTIN2 and probably SEPTIN4 at the sperm annulus which is required for the structural integrity and motility of the sperm tail during postmeiotic differentiation. This chain is Septin-6, found in Mus musculus (Mouse).